Reading from the N-terminus, the 581-residue chain is Protein GAMETOPHYTE DEFECTIVE 1 (581 aa).

Residues 452–467 (SMNIESTSEGGSMSPS) are compositionally biased toward polar residues. A disordered region spans residues 452–512 (SMNIESTSEG…TTGHASNDEM (61 aa)). Basic and acidic residues predominate over residues 496-512 (ENSKERATTGHASNDEM).

This sequence belongs to the eukaryotic/archaeal RNase P protein component 3 family. Probable component of nuclear RNase P and RNase MRP ribonucleoproteins. Interacts with POP5. As to expression, mostly expressed in inflorescence and roots, to a lower extent in leaves, and, at low levels, in siliques, seedlings and stems.

It localises to the nucleus. The protein localises to the nucleolus. The protein resides in the mitochondrion. Its function is as follows. Probable component of ribonuclease P, a ribonucleoprotein complex that generates mature tRNA molecules by cleaving their 5'-ends. May also be a component of the MRP ribonuclease complex, which cleaves pre-rRNA sequences. Required for female gametophyte development and male competence. This is Protein GAMETOPHYTE DEFECTIVE 1 from Arabidopsis thaliana (Mouse-ear cress).